The sequence spans 417 residues: Glucose-1-phosphate adenylyltransferase (417 aa).

Alpha-D-glucose 1-phosphate is bound by residues Y98, G163, 178 to 179, and S197; that span reads EK.

The protein belongs to the bacterial/plant glucose-1-phosphate adenylyltransferase family. As to quaternary structure, homotetramer.

The catalysed reaction is alpha-D-glucose 1-phosphate + ATP + H(+) = ADP-alpha-D-glucose + diphosphate. It functions in the pathway glycan biosynthesis; glycogen biosynthesis. Involved in the biosynthesis of ADP-glucose, a building block required for the elongation reactions to produce glycogen. Catalyzes the reaction between ATP and alpha-D-glucose 1-phosphate (G1P) to produce pyrophosphate and ADP-Glc. The sequence is that of Glucose-1-phosphate adenylyltransferase from Koribacter versatilis (strain Ellin345).